A 186-amino-acid polypeptide reads, in one-letter code: Zinc finger AN1 domain-containing stress-associated protein 12 (186 aa).

2 consecutive AN1-type zinc fingers follow at residues 10–58 and 97–147; these read PDLG…HGSR and KKKK…INTA. Zn(2+) contacts are provided by cysteine 16, cysteine 21, cysteine 31, cysteine 34, cysteine 39, histidine 42, histidine 48, cysteine 50, cysteine 103, cysteine 108, cysteine 120, cysteine 123, cysteine 128, histidine 131, histidine 137, and cysteine 139. The disordered stretch occupies residues 167–186; the sequence is KGCGRGSSVSSKSSPSVRSF. Low complexity predominate over residues 172 to 186; it reads GSSVSSKSSPSVRSF.

Functionally, may be involved in environmental stress response. The chain is Zinc finger AN1 domain-containing stress-associated protein 12 (SAP12) from Arabidopsis thaliana (Mouse-ear cress).